The sequence spans 229 residues: 2-phytyl-1,4-naphtoquinone methyltransferase (229 aa).

This sequence belongs to the class I-like SAM-binding methyltransferase superfamily. MenG/UbiE family.

It carries out the reaction demethylphylloquinol + S-adenosyl-L-methionine = phylloquinol + S-adenosyl-L-homocysteine + H(+). It functions in the pathway cofactor biosynthesis; phylloquinone biosynthesis. Methyltransferase required for the conversion of 2-phytyl-1,4-beta-naphthoquinol to phylloquinol. This Nostoc sp. (strain PCC 7120 / SAG 25.82 / UTEX 2576) protein is 2-phytyl-1,4-naphtoquinone methyltransferase.